We begin with the raw amino-acid sequence, 266 residues long: MTVIDILTRVDSICKKYDKYDVDKQREANISGDDAFARLYGAFETQIETALEKAELVTKEKNRAAAVAMNAEIRRTKARLSEEVPKLQRLAVKRVKGLTTEELAARNDLVLALPARIEAIPDGTAGGPKSTSAWTPSSTTSRPDIKFDSDGRFDDDYFQESNESSQFRQEYEMRKIKQEQGLDMISEGLDALKNMASDMNEELDRQVPLMDEIDTKVDRATSDLKNTNVRLKDTVNQLRSSRNFCIDIVLLCIVLGIAAYLYNVLK.

The Cytoplasmic portion of the chain corresponds to 1–243 (MTVIDILTRV…TVNQLRSSRN (243 aa)). The residue at position 12 (Ser-12) is a Phosphoserine. The stretch at 44–87 (ETQIETALEKAELVTKEKNRAAAVAMNAEIRRTKARLSEEVPKL) forms a coiled coil. Positions 122 to 146 (DGTAGGPKSTSAWTPSSTTSRPDIK) are disordered. The segment covering 130–141 (STSAWTPSSTTS) has biased composition (low complexity). In terms of domain architecture, t-SNARE coiled-coil homology spans 172–234 (EMRKIKQEQG…KNTNVRLKDT (63 aa)). The helical; Anchor for type IV membrane protein transmembrane segment at 244 to 264 (FCIDIVLLCIVLGIAAYLYNV) threads the bilayer. The Vesicular segment spans residues 265-266 (LK).

The protein belongs to the syntaxin family. In terms of assembly, part of the t-SNARE complex. Expressed in root, leaf, stem, flower and silique.

The protein localises to the membrane. Vesicle trafficking protein that functions in the secretory pathway. The protein is Syntaxin-71 (SYP71) of Arabidopsis thaliana (Mouse-ear cress).